Reading from the N-terminus, the 103-residue chain is Small ribosomal subunit protein uS10 (103 aa).

It belongs to the universal ribosomal protein uS10 family. Part of the 30S ribosomal subunit.

In terms of biological role, involved in the binding of tRNA to the ribosomes. This is Small ribosomal subunit protein uS10 from Shewanella pealeana (strain ATCC 700345 / ANG-SQ1).